Here is a 409-residue protein sequence, read N- to C-terminus: Dihydrolipoyllysine-residue succinyltransferase component of 2-oxoglutarate dehydrogenase complex (409 aa).

Positions Ala2 to Ser77 constitute a Lipoyl-binding domain. Lys43 carries the N6-lipoyllysine modification. Over residues Asp83–Asn107 the composition is skewed to polar residues. Residues Asp83–Asp114 are disordered. A Peripheral subunit-binding (PSBD) domain is found at Asp114–Ile151. Catalysis depends on residues His380 and Asp384.

The protein belongs to the 2-oxoacid dehydrogenase family. Forms a 24-polypeptide structural core with octahedral symmetry. Part of the 2-oxoglutarate dehydrogenase (OGDH) complex composed of E1 (2-oxoglutarate dehydrogenase), E2 (dihydrolipoamide succinyltransferase) and E3 (dihydrolipoamide dehydrogenase); the complex contains multiple copies of the three enzymatic components (E1, E2 and E3). Requires (R)-lipoate as cofactor.

It catalyses the reaction N(6)-[(R)-dihydrolipoyl]-L-lysyl-[protein] + succinyl-CoA = N(6)-[(R)-S(8)-succinyldihydrolipoyl]-L-lysyl-[protein] + CoA. It participates in amino-acid degradation; L-lysine degradation via saccharopine pathway; glutaryl-CoA from L-lysine: step 6/6. E2 component of the 2-oxoglutarate dehydrogenase (OGDH) complex which catalyzes the second step in the conversion of 2-oxoglutarate to succinyl-CoA and CO(2). The sequence is that of Dihydrolipoyllysine-residue succinyltransferase component of 2-oxoglutarate dehydrogenase complex (sucB) from Haemophilus influenzae (strain ATCC 51907 / DSM 11121 / KW20 / Rd).